A 175-amino-acid chain; its full sequence is Large ribosomal subunit protein uL10 (175 aa).

It belongs to the universal ribosomal protein uL10 family. In terms of assembly, part of the ribosomal stalk of the 50S ribosomal subunit. The N-terminus interacts with L11 and the large rRNA to form the base of the stalk. The C-terminus forms an elongated spine to which L12 dimers bind in a sequential fashion forming a multimeric L10(L12)X complex.

Forms part of the ribosomal stalk, playing a central role in the interaction of the ribosome with GTP-bound translation factors. This Prochlorococcus marinus (strain MIT 9215) protein is Large ribosomal subunit protein uL10.